We begin with the raw amino-acid sequence, 317 residues long: Ferrochelatase (317 aa).

Residues His-184 and Glu-259 each contribute to the Fe cation site.

Belongs to the ferrochelatase family.

The protein localises to the cytoplasm. It carries out the reaction heme b + 2 H(+) = protoporphyrin IX + Fe(2+). It participates in porphyrin-containing compound metabolism; protoheme biosynthesis; protoheme from protoporphyrin-IX: step 1/1. Functionally, catalyzes the ferrous insertion into protoporphyrin IX. This Chlamydia muridarum (strain MoPn / Nigg) protein is Ferrochelatase.